A 529-amino-acid chain; its full sequence is Ribonuclease Y (529 aa).

The helical transmembrane segment at 4–24 (GLIYISLEVLVACLITALIMY) threads the bilayer. Residues 216–297 (LTTRIALPCS…NRIEEVYHRV (82 aa)) form the KH domain. An HD domain is found at 342 to 435 (ALQHSKEVAL…VCAADALSAG (94 aa)).

It belongs to the RNase Y family.

Its subcellular location is the cell membrane. Endoribonuclease that initiates mRNA decay. The sequence is that of Ribonuclease Y from Helicobacter pylori (strain HPAG1).